Reading from the N-terminus, the 321-residue chain is Malate dehydrogenase (321 aa).

Residues 10 to 15 (GSGMIG) and Asp-34 contribute to the NAD(+) site. The substrate site is built by Arg-83 and Arg-89. Residues Asn-96 and 119-121 (ITN) contribute to the NAD(+) site. Residues Asn-121 and Arg-152 each coordinate substrate. His-176 acts as the Proton acceptor in catalysis.

It belongs to the LDH/MDH superfamily. MDH type 3 family.

The catalysed reaction is (S)-malate + NAD(+) = oxaloacetate + NADH + H(+). Functionally, catalyzes the reversible oxidation of malate to oxaloacetate. This is Malate dehydrogenase from Bartonella bacilliformis (strain ATCC 35685 / KC583 / Herrer 020/F12,63).